A 148-amino-acid polypeptide reads, in one-letter code: Arginine repressor (148 aa).

Belongs to the ArgR family.

Its subcellular location is the cytoplasm. It participates in amino-acid biosynthesis; L-arginine biosynthesis [regulation]. Functionally, regulates arginine biosynthesis genes. The sequence is that of Arginine repressor from Prosthecochloris aestuarii (strain DSM 271 / SK 413).